The following is a 286-amino-acid chain: Putative S-adenosyl-L-methionine-dependent methyltransferase FRAAL3718 (286 aa).

Residues aspartate 122 and 151–152 (DL) each bind S-adenosyl-L-methionine.

This sequence belongs to the UPF0677 family.

Exhibits S-adenosyl-L-methionine-dependent methyltransferase activity. The sequence is that of Putative S-adenosyl-L-methionine-dependent methyltransferase FRAAL3718 from Frankia alni (strain DSM 45986 / CECT 9034 / ACN14a).